A 278-amino-acid chain; its full sequence is Expansin-B17 (278 aa).

The first 26 residues, 1–26 (MAAASSRSFSLCVLLLLLLLAPPISA), serve as a signal peptide directing secretion. Positions 66-176 (GGACGYGSLV…RRTACKYGGK (111 aa)) constitute an Expansin-like EG45 domain. 3 cysteine pairs are disulfide-bonded: Cys-69–Cys-98, Cys-101–Cys-171, and Cys-106–Cys-112. Residues 189 to 270 (FWLSLLVEFE…NWKPTATYTS (82 aa)) enclose the Expansin-like CBD domain.

It belongs to the expansin family. Expansin B subfamily.

The protein localises to the secreted. It is found in the cell wall. Its subcellular location is the membrane. Functionally, may cause loosening and extension of plant cell walls by disrupting non-covalent bonding between cellulose microfibrils and matrix glucans. No enzymatic activity has been found. May be required for rapid internodal elongation in deepwater rice during submergence. This is Expansin-B17 (EXPB17) from Oryza sativa subsp. japonica (Rice).